Reading from the N-terminus, the 215-residue chain is 3-isopropylmalate dehydratase small subunit (215 aa).

The protein belongs to the LeuD family. LeuD type 1 subfamily. Heterodimer of LeuC and LeuD.

The enzyme catalyses (2R,3S)-3-isopropylmalate = (2S)-2-isopropylmalate. It functions in the pathway amino-acid biosynthesis; L-leucine biosynthesis; L-leucine from 3-methyl-2-oxobutanoate: step 2/4. Its function is as follows. Catalyzes the isomerization between 2-isopropylmalate and 3-isopropylmalate, via the formation of 2-isopropylmaleate. The sequence is that of 3-isopropylmalate dehydratase small subunit from Xanthomonas axonopodis pv. citri (strain 306).